The sequence spans 209 residues: Endonuclease III (209 aa).

The 20-residue stretch at 108–127 (RTELESLPGVGRKTANIILN) folds into the HhH domain. C187, C194, C197, and C203 together coordinate [4Fe-4S] cluster.

This sequence belongs to the Nth/MutY family. [4Fe-4S] cluster serves as cofactor.

The enzyme catalyses 2'-deoxyribonucleotide-(2'-deoxyribose 5'-phosphate)-2'-deoxyribonucleotide-DNA = a 3'-end 2'-deoxyribonucleotide-(2,3-dehydro-2,3-deoxyribose 5'-phosphate)-DNA + a 5'-end 5'-phospho-2'-deoxyribonucleoside-DNA + H(+). Its function is as follows. DNA repair enzyme that has both DNA N-glycosylase activity and AP-lyase activity. The DNA N-glycosylase activity releases various damaged pyrimidines from DNA by cleaving the N-glycosidic bond, leaving an AP (apurinic/apyrimidinic) site. The AP-lyase activity cleaves the phosphodiester bond 3' to the AP site by a beta-elimination, leaving a 3'-terminal unsaturated sugar and a product with a terminal 5'-phosphate. The chain is Endonuclease III from Buchnera aphidicola subsp. Schizaphis graminum (strain Sg).